Here is a 186-residue protein sequence, read N- to C-terminus: Pyridoxal 5'-phosphate synthase subunit PdxT (186 aa).

Glycine 46 to serine 48 contacts L-glutamine. Catalysis depends on cysteine 75, which acts as the Nucleophile. Residues arginine 101 and isoleucine 128–arginine 129 contribute to the L-glutamine site. Residues histidine 165 and glutamate 167 each act as charge relay system in the active site.

This sequence belongs to the glutaminase PdxT/SNO family. In the presence of PdxS, forms a dodecamer of heterodimers. Only shows activity in the heterodimer.

The catalysed reaction is aldehydo-D-ribose 5-phosphate + D-glyceraldehyde 3-phosphate + L-glutamine = pyridoxal 5'-phosphate + L-glutamate + phosphate + 3 H2O + H(+). It catalyses the reaction L-glutamine + H2O = L-glutamate + NH4(+). It participates in cofactor biosynthesis; pyridoxal 5'-phosphate biosynthesis. Catalyzes the hydrolysis of glutamine to glutamate and ammonia as part of the biosynthesis of pyridoxal 5'-phosphate. The resulting ammonia molecule is channeled to the active site of PdxS. This chain is Pyridoxal 5'-phosphate synthase subunit PdxT, found in Methanocaldococcus jannaschii (strain ATCC 43067 / DSM 2661 / JAL-1 / JCM 10045 / NBRC 100440) (Methanococcus jannaschii).